The chain runs to 30 residues: Trypsin inhibitor 1 (30 aa).

Cystine bridges form between Cys-4–Cys-21, Cys-11–Cys-23, and Cys-17–Cys-29.

It belongs to the protease inhibitor I7 (squash-type serine protease inhibitor) family.

The protein resides in the secreted. Functionally, inhibits trypsin. This chain is Trypsin inhibitor 1, found in Citrullus lanatus (Watermelon).